Consider the following 419-residue polypeptide: Gamma-glutamyl phosphate reductase (419 aa).

This sequence belongs to the gamma-glutamyl phosphate reductase family.

The protein localises to the cytoplasm. The enzyme catalyses L-glutamate 5-semialdehyde + phosphate + NADP(+) = L-glutamyl 5-phosphate + NADPH + H(+). It functions in the pathway amino-acid biosynthesis; L-proline biosynthesis; L-glutamate 5-semialdehyde from L-glutamate: step 2/2. In terms of biological role, catalyzes the NADPH-dependent reduction of L-glutamate 5-phosphate into L-glutamate 5-semialdehyde and phosphate. The product spontaneously undergoes cyclization to form 1-pyrroline-5-carboxylate. The sequence is that of Gamma-glutamyl phosphate reductase from Azoarcus sp. (strain BH72).